We begin with the raw amino-acid sequence, 56 residues long: Small ribosomal subunit protein uS14 (56 aa).

Residues C21, C24, C39, and C42 each coordinate Zn(2+).

This sequence belongs to the universal ribosomal protein uS14 family. In terms of assembly, component of the 40S small ribosomal subunit. Zn(2+) serves as cofactor.

Its subcellular location is the cytoplasm. It localises to the cytosol. The protein resides in the rough endoplasmic reticulum. This is Small ribosomal subunit protein uS14 (RpS29) from Lonomia obliqua (Moth).